The sequence spans 235 residues: MKYKKVVEGIFLKRPNRFIAQVLIDGQEETVHVKNTGRCRELLIPGVKVLLEDGRDNPNRKTKYSLISVWKGDMLINMDSQAPNAAAFTAIKENRVKEIQSLTHLKREVTFGKSRFDLYFETLNNGTLQKGFIEVKGVTLENEGICMFPDAPTERGTKHVLEMVEAVKQGYRGILLFVIQMKGPNLFKLNWEMDRAFSQAVQFASENGVEVLAYDAVIEKDEIILGDRVDIDYRA.

The protein belongs to the SfsA family.

This chain is Sugar fermentation stimulation protein homolog, found in Alkaliphilus oremlandii (strain OhILAs) (Clostridium oremlandii (strain OhILAs)).